Here is a 477-residue protein sequence, read N- to C-terminus: Mitochondrial adenyl nucleotide antiporter SLC25A24 (477 aa).

A regulatory N-terminal domain region spans residues 1 to 174; the sequence is MHQLIRKFVF…RYWKKSTVLD (174 aa). Residues 1–198 are Mitochondrial intermembrane-facing; sequence MHQLIRKFVF…EKTTGMWWKQ (198 aa). The region spanning 20–55 is the EF-hand 1 domain; it reads DNTKSFAELFEKLDVNKDGKVDVSELKTGLAAMGFS. Ca(2+)-binding residues include Asp-33, Asn-35, Asp-37, Lys-39, Glu-44, Asp-69, Asp-71, Asp-73, Glu-80, Asp-100, Asn-102, Asp-104, Arg-106, Glu-111, Asp-136, Asp-138, Thr-140, Thr-142, and Glu-147. 2 EF-hand domains span residues 87–122 and 123–158; these read EHEK…LGIN and LSDK…NPAE. Positions 160–169 are linker region; that stretch reads LQQIIRYWKK. The segment at 175-477 is C-terminal transmembrane transporter domain; the sequence is IGDSLTIPDE…YMRSGLGISK (303 aa). 3 Solcar repeats span residues 193-279, 287-372, and 384-472; these read GMWW…YKKL, VQSH…LKNT, and PGVL…MRSG. A helical transmembrane segment spans residues 199 to 216; sequence LAAGGVAGAVSRTGTAPL. Residues 217–253 are Mitochondrial matrix-facing; that stretch reads DRMKVFMQVHSSKTNKISLVNGFKQMIKEGGVASLWR. A helical membrane pass occupies residues 254–273; it reads GNGVNVIKIAPETAIKFMAY. At 274–296 the chain is on the mitochondrial intermembrane side; that stretch reads EQYKKLLSKDGGKVQSHERFMAG. A helical membrane pass occupies residues 297 to 310; the sequence is SLAGATAQTAIYPM. At 311-346 the chain is on the mitochondrial matrix side; that stretch reads EVMKTRLTLRKTGQYSGMFDCAKKILRKEGVKAFYK. A helical transmembrane segment spans residues 347 to 366; sequence GYVPNILGIIPYAGIDLAVY. The Mitochondrial intermembrane portion of the chain corresponds to 367–389; that stretch reads ETLKNTWLSHYAKDTANPGVLVL. Residues 390 to 407 traverse the membrane as a helical segment; the sequence is LGCGTISSTCGQLASYPL. The Mitochondrial matrix segment spans residues 408–446; the sequence is ALIRTRMQAMASMEGSEQVSMSKLVKKIMQKEGFFGLYR. A helical membrane pass occupies residues 447–466; sequence GILPNFMKVIPAVSISYVVY. Topologically, residues 467–477 are mitochondrial intermembrane; sequence EYMRSGLGISK.

It belongs to the mitochondrial carrier (TC 2.A.29) family. Monomer.

The protein resides in the mitochondrion inner membrane. It catalyses the reaction Mg(2+)(out) + phosphate(in) + ATP(out) = Mg(2+)(in) + phosphate(out) + ATP(in). The enzyme catalyses ADP(out) + phosphate(in) + H(+)(out) = ADP(in) + phosphate(out) + H(+)(in). The catalysed reaction is AMP(out) + phosphate(in) = AMP(in) + phosphate(out). It carries out the reaction phosphate(in) + ATP(out) + 2 H(+)(out) = phosphate(out) + ATP(in) + 2 H(+)(in). It catalyses the reaction dADP(in) + ADP(out) = dADP(out) + ADP(in). The enzyme catalyses Mg(2+)(in) + ADP(out) + ATP(in) + H(+)(out) = Mg(2+)(out) + ADP(in) + ATP(out) + H(+)(in). The catalysed reaction is ADP(out) + diphosphate(in) = ADP(in) + diphosphate(out). It carries out the reaction dAMP(in) + ADP(out) + H(+)(out) = dAMP(out) + ADP(in) + H(+)(in). It catalyses the reaction 3'-AMP(in) + ADP(out) + H(+)(out) = 3'-AMP(out) + ADP(in) + H(+)(in). The enzyme catalyses dAMP(out) + phosphate(in) = dAMP(in) + phosphate(out). The catalysed reaction is 3'-AMP(out) + phosphate(in) = 3'-AMP(in) + phosphate(out). It carries out the reaction dADP(out) + phosphate(in) + H(+)(out) = dADP(in) + phosphate(out) + H(+)(in). Activated by an increase in cytosolic calcium levels that induce a conformational change of the N-terminal regulatory domain, uncapping the channel and allowing transport. Inhibited by bathophenanthroline, mersalyl, p-hydroxymercuribenzoate, bromcresol purple and tannic acid. Functionally, electroneutral antiporter that mediates the transport of adenyl nucleotides through the inner mitochondrial membrane. Originally identified as an ATP-magnesium/inorganic phosphate antiporter, it also acts as a broad specificity adenyl nucleotide antiporter. By regulating the mitochondrial matrix adenyl nucleotide pool could adapt to changing cellular energetic demands and indirectly regulate adenyl nucleotide-dependent metabolic pathways. The protein is Mitochondrial adenyl nucleotide antiporter SLC25A24 (slc25a24) of Danio rerio (Zebrafish).